The sequence spans 554 residues: Muellerian-inhibiting factor (554 aa).

A signal peptide spans M1–A24. A propeptide spanning residues V25–R446 is cleaved from the precursor. 3 N-linked (GlcNAc...) asparagine glycosylation sites follow: N62, N326, and N410. 3 disulfide bridges follow: C456-C520, C482-C551, and C486-C553.

The protein belongs to the TGF-beta family. As to quaternary structure, homodimer; disulfide-linked. In terms of processing, preproprotein is proteolytically processed to generate N- and C-terminal cleavage products that homodimerize and associate to form a biologically active non-covalent complex. Binding of the non-covalent complex to AMHRII induces dissociation of the pro-region from the mature C-terminal dimer. The N-terminal portion of the protein, despite having no intrinsic activity, has the role of amplifying the activity of the C-terminus. In terms of tissue distribution, expressed in Sertoli cells of fetal testes, and in testes just after birth, but absent in adult testes. In female, AMH is expressed after birth in the granulosa cells of the follicle.

It is found in the secreted. Functionally, plays an important role in several reproductive functions, including Muellerian duct regression during male fetal sexua,l differentiation and in the adult plays a role in Leydig cell differentiation and function. In female acts as a negative regulator of the primordial to primary follicle transition and decreases FSH sensitivity of growing follicles. Binds to its sole type II receptor, AMHR2 that recruits type I receptors ACVR1 and BMPR1A which subsequently activates the Smad pathway. The sequence is that of Muellerian-inhibiting factor (Amh) from Mus musculus (Mouse).